Consider the following 170-residue polypeptide: Cytochrome b6-f complex subunit 4 (170 aa).

The next 3 membrane-spanning stretches (helical) occupy residues leucine 46–valine 66, leucine 105–glutamate 125, and threonine 141–leucine 161.

This sequence belongs to the cytochrome b family. PetD subfamily. The 4 large subunits of the cytochrome b6-f complex are cytochrome b6, subunit IV (17 kDa polypeptide, PetD), cytochrome f and the Rieske protein, while the 4 small subunits are PetG, PetL, PetM and PetN. The complex functions as a dimer.

The protein resides in the cellular thylakoid membrane. In terms of biological role, component of the cytochrome b6-f complex, which mediates electron transfer between photosystem II (PSII) and photosystem I (PSI), cyclic electron flow around PSI, and state transitions. The chain is Cytochrome b6-f complex subunit 4 from Synechococcus sp. (strain JA-2-3B'a(2-13)) (Cyanobacteria bacterium Yellowstone B-Prime).